We begin with the raw amino-acid sequence, 133 residues long: Small ribosomal subunit protein uS8 (133 aa).

The protein belongs to the universal ribosomal protein uS8 family. As to quaternary structure, part of the 30S ribosomal subunit. Contacts proteins S5 and S12.

Its function is as follows. One of the primary rRNA binding proteins, it binds directly to 16S rRNA central domain where it helps coordinate assembly of the platform of the 30S subunit. This is Small ribosomal subunit protein uS8 from Chlamydia felis (strain Fe/C-56) (Chlamydophila felis).